Consider the following 306-residue polypeptide: 4-diphosphocytidyl-2-C-methyl-D-erythritol kinase (306 aa).

Lys-11 is an active-site residue. Residue 113–123 (PPEGGIGGGSS) coordinates ATP. Residue Asp-153 is part of the active site.

It belongs to the GHMP kinase family. IspE subfamily.

It catalyses the reaction 4-CDP-2-C-methyl-D-erythritol + ATP = 4-CDP-2-C-methyl-D-erythritol 2-phosphate + ADP + H(+). The protein operates within isoprenoid biosynthesis; isopentenyl diphosphate biosynthesis via DXP pathway; isopentenyl diphosphate from 1-deoxy-D-xylulose 5-phosphate: step 3/6. Catalyzes the phosphorylation of the position 2 hydroxy group of 4-diphosphocytidyl-2C-methyl-D-erythritol. The sequence is that of 4-diphosphocytidyl-2-C-methyl-D-erythritol kinase from Leptospira biflexa serovar Patoc (strain Patoc 1 / ATCC 23582 / Paris).